We begin with the raw amino-acid sequence, 703 residues long: Probable ATP-dependent RNA helicase DHX35 (703 aa).

The Helicase ATP-binding domain maps to Leu-64–Ala-229. Gly-77 to Ser-84 lines the ATP pocket. The DEAH box motif lies at Asp-176–His-179. In terms of domain architecture, Helicase C-terminal spans Thr-261 to Gly-438.

It belongs to the DEAD box helicase family. DEAH subfamily. Identified in the spliceosome C complex.

It catalyses the reaction ATP + H2O = ADP + phosphate + H(+). May be involved in pre-mRNA splicing. In Homo sapiens (Human), this protein is Probable ATP-dependent RNA helicase DHX35 (DHX35).